A 145-amino-acid polypeptide reads, in one-letter code: Early nodulin-like protein 21 (145 aa).

Residues 1 to 17 (MFLWLVIVLTISASVSS) form the signal peptide. A Phytocyanin domain is found at 18–116 (YEHKLNWVVP…GQKMIVEVIS (99 aa)). Residues Asn30 and Asn71 are each glycosylated (N-linked (GlcNAc...) asparagine). A disulfide bridge connects residues Cys70 and Cys104. Residue Ser116 is the site of GPI-anchor amidated serine attachment. Positions 117–145 (RDHTTTSAAPPAAFAVLLCFFSLSLYFVA) are cleaved as a propeptide — removed in mature form.

This sequence belongs to the early nodulin-like (ENODL) family. Mostly expressed in leaves and flowers, and, to a lower extent, in roots and stems, but barely in seedlings and seeds.

It is found in the cell membrane. In terms of biological role, may act as a carbohydrate transporter. This Arabidopsis thaliana (Mouse-ear cress) protein is Early nodulin-like protein 21.